The sequence spans 566 residues: Oxygen-dependent choline dehydrogenase (566 aa).

7–36 (DYIICGAGSAGNVLATRLTEDPDVTVLLLE) is a binding site for FAD. Residues 180–202 (NGYQQEGFGPMDRTVTPKGRRAS) are disordered. The Proton acceptor role is filled by His-474.

This sequence belongs to the GMC oxidoreductase family. Requires FAD as cofactor.

The catalysed reaction is choline + A = betaine aldehyde + AH2. The enzyme catalyses betaine aldehyde + NAD(+) + H2O = glycine betaine + NADH + 2 H(+). It functions in the pathway amine and polyamine biosynthesis; betaine biosynthesis via choline pathway; betaine aldehyde from choline (cytochrome c reductase route): step 1/1. In terms of biological role, involved in the biosynthesis of the osmoprotectant glycine betaine. Catalyzes the oxidation of choline to betaine aldehyde and betaine aldehyde to glycine betaine at the same rate. The protein is Oxygen-dependent choline dehydrogenase of Burkholderia lata (strain ATCC 17760 / DSM 23089 / LMG 22485 / NCIMB 9086 / R18194 / 383).